The following is a 756-amino-acid chain: Centromere protein I (756 aa).

Positions 1 to 60 (MSPQKRVKNVQAQNRTSQGSSSFQTTLSAWKVKQDPSNSKNISKHGQNNPVGDYEHADDQ) are disordered. Polar residues-rich tracts occupy residues 10-28 (VQAQ…TTLS) and 35-50 (DPSN…QNNP).

Belongs to the CENP-I/CTF3 family. Component of the CENPA-CAD complex, composed of CENPI, CENPK, CENPL, CENPO, CENPP, CENPQ, CENPR and CENPS. The CENPA-CAD complex interacts with the CENPA-NAC complex, at least composed of CENPA, CENPC, CENPH, CENPM, CENPN, CENPT and CENPU. Interacts with SENP6. Post-translationally, sumoylated. Sumoylated form can be polyubiquitinated by RNF4, leading to its degradation. Desumoylation by SENP6 prevents its degradation.

It is found in the nucleus. It localises to the chromosome. The protein resides in the centromere. Its function is as follows. Component of the CENPA-CAD (nucleosome distal) complex, a complex recruited to centromeres which is involved in assembly of kinetochore proteins, mitotic progression and chromosome segregation. May be involved in incorporation of newly synthesized CENPA into centromeres via its interaction with the CENPA-NAC complex. Required for the localization of CENPF, MAD1L1 and MAD2 (MAD2L1 or MAD2L2) to kinetochores. Involved in the response of gonadal tissues to follicle-stimulating hormone. The protein is Centromere protein I (CENPI) of Homo sapiens (Human).